Reading from the N-terminus, the 434-residue chain is Glutamyl-tRNA reductase (434 aa).

Substrate is bound by residues 57-60 (TCNR), Ser-116, 121-123 (ETQ), and Gln-127. The active-site Nucleophile is Cys-58. Position 196–201 (196–201 (GAGEMI)) interacts with NADP(+).

Belongs to the glutamyl-tRNA reductase family. Homodimer.

It carries out the reaction (S)-4-amino-5-oxopentanoate + tRNA(Glu) + NADP(+) = L-glutamyl-tRNA(Glu) + NADPH + H(+). It participates in porphyrin-containing compound metabolism; protoporphyrin-IX biosynthesis; 5-aminolevulinate from L-glutamyl-tRNA(Glu): step 1/2. Catalyzes the NADPH-dependent reduction of glutamyl-tRNA(Glu) to glutamate 1-semialdehyde (GSA). The sequence is that of Glutamyl-tRNA reductase from Burkholderia pseudomallei (strain 1106a).